Reading from the N-terminus, the 193-residue chain is Early light-induced protein 2, chloroplastic (193 aa).

The transit peptide at 1 to 43 directs the protein to the chloroplast; sequence MATASFNMQSVFAAPSGVLTTRNIRNTNQLFFKRIAPVGVRCM. Positions 46–80 are disordered; the sequence is GDPIKEDPSVPSTSTSATPPQMPQSPPPPVSKPKV. Residues 54-64 are compositionally biased toward low complexity; that stretch reads SVPSTSTSATP. Pro residues predominate over residues 65–76; sequence PQMPQSPPPPVS. 3 helical membrane passes run 102-122, 129-149, and 173-193; these read LAMVGFVAAIAMELSKGENVF, GVGWFLGTTALLTLASMVPLF, and FAMLGLVALAFTEYVTGGTLV.

The protein belongs to the ELIP/psbS family.

It is found in the plastid. The protein localises to the chloroplast thylakoid membrane. Probably involved in the integration of pigments into the mature light-harvesting pigment-protein complexes. Light-harvesting chlorophyll (LHC) a/b-binding protein required to ensure a high rate of chlorophyll accumulation during deetiolation in continuous high light. Involved in seed germination. May fulfill a photoprotective functions. Prevents excess accumulation of free chlorophyll by inhibiting the entire chlorophyll biosynthesis pathway (e.g. 5-aminolevulinate synthesis and Mg-protoporphyrin IX chelatase activity), and hence prevent photooxidative stress. The chain is Early light-induced protein 2, chloroplastic from Arabidopsis thaliana (Mouse-ear cress).